The primary structure comprises 521 residues: Probable glycogen synthase (521 aa).

It belongs to the glycosyltransferase 1 family. Bacterial/plant glycogen synthase subfamily.

The enzyme catalyses [(1-&gt;4)-alpha-D-glucosyl](n) + ADP-alpha-D-glucose = [(1-&gt;4)-alpha-D-glucosyl](n+1) + ADP + H(+). The protein operates within glycan biosynthesis; glycogen biosynthesis. Its function is as follows. Synthesizes alpha-1,4-glucan chains using ADP-glucose. In Methanocaldococcus jannaschii (strain ATCC 43067 / DSM 2661 / JAL-1 / JCM 10045 / NBRC 100440) (Methanococcus jannaschii), this protein is Probable glycogen synthase (glgA).